A 459-amino-acid polypeptide reads, in one-letter code: Ribulose bisphosphate carboxylase large chain (459 aa).

Lys4 carries the post-translational modification N6,N6,N6-trimethyllysine. Residues Asn113 and Thr163 each contribute to the substrate site. Lys165 acts as the Proton acceptor in catalysis. A substrate-binding site is contributed by Lys167. Lys191, Asp193, and Glu194 together coordinate Mg(2+). An N6-carboxylysine modification is found at Lys191. His284 functions as the Proton acceptor in the catalytic mechanism. Residues Arg285, His317, and Ser369 each contribute to the substrate site.

It belongs to the RuBisCO large chain family. Type I subfamily. Heterohexadecamer of 8 large chains and 8 small chains; disulfide-linked. The disulfide link is formed within the large subunit homodimers. Requires Mg(2+) as cofactor. Post-translationally, the disulfide bond which can form in the large chain dimeric partners within the hexadecamer appears to be associated with oxidative stress and protein turnover.

It is found in the plastid. The protein resides in the chloroplast. It carries out the reaction 2 (2R)-3-phosphoglycerate + 2 H(+) = D-ribulose 1,5-bisphosphate + CO2 + H2O. The catalysed reaction is D-ribulose 1,5-bisphosphate + O2 = 2-phosphoglycolate + (2R)-3-phosphoglycerate + 2 H(+). RuBisCO catalyzes two reactions: the carboxylation of D-ribulose 1,5-bisphosphate, the primary event in carbon dioxide fixation, as well as the oxidative fragmentation of the pentose substrate in the photorespiration process. Both reactions occur simultaneously and in competition at the same active site. This Apium graveolens (Celery) protein is Ribulose bisphosphate carboxylase large chain.